We begin with the raw amino-acid sequence, 226 residues long: Probable transaldolase (226 aa).

The active-site Schiff-base intermediate with substrate is the Lys91.

The protein belongs to the transaldolase family. Type 3B subfamily.

It is found in the cytoplasm. The enzyme catalyses D-sedoheptulose 7-phosphate + D-glyceraldehyde 3-phosphate = D-erythrose 4-phosphate + beta-D-fructose 6-phosphate. Its pathway is carbohydrate degradation; pentose phosphate pathway; D-glyceraldehyde 3-phosphate and beta-D-fructose 6-phosphate from D-ribose 5-phosphate and D-xylulose 5-phosphate (non-oxidative stage): step 2/3. In terms of biological role, transaldolase is important for the balance of metabolites in the pentose-phosphate pathway. The polypeptide is Probable transaldolase (Chlorobium phaeobacteroides (strain DSM 266 / SMG 266 / 2430)).